A 463-amino-acid chain; its full sequence is Immune-associated nucleotide-binding protein 10 (463 aa).

The 209-residue stretch at 3-211 folds into the AIG1-type G domain; that stretch reads EPIKNIVLVG…YTYQLHRKIK (209 aa). A G1 region spans residues 12–19; sequence GRTGNGKS. Residues 12–20 and serine 33 each bind GTP; that span reads GRTGNGKSS. Residues 39 to 43 are G2; sequence GVTMI. The G3 stretch occupies residues 61–64; it reads DTPG. Positions 131-134 are G4; that stretch reads TGGD. The tract at residues 170 to 172 is G5; that stretch reads DNK. Asparagine 171 is a GTP binding site. The stretch at 173 to 308 forms a coiled coil; it reads SKDEKKKVEQ…KQLIAQANRM (136 aa).

It belongs to the TRAFAC class TrmE-Era-EngA-EngB-Septin-like GTPase superfamily. AIG1/Toc34/Toc159-like paraseptin GTPase family. IAN subfamily. In terms of tissue distribution, expressed in radicles of the germinating seeds.

The protein is Immune-associated nucleotide-binding protein 10 of Arabidopsis thaliana (Mouse-ear cress).